Here is a 120-residue protein sequence, read N- to C-terminus: Large ribosomal subunit protein uL18 (120 aa).

A disordered region spans residues 1–25 (MKQTRTAARQSRHQRIRRKVKGTSD). Over residues 10-21 (QSRHQRIRRKVK) the composition is skewed to basic residues.

This sequence belongs to the universal ribosomal protein uL18 family. As to quaternary structure, part of the 50S ribosomal subunit; part of the 5S rRNA/L5/L18/L25 subcomplex. Contacts the 5S and 23S rRNAs.

This is one of the proteins that bind and probably mediate the attachment of the 5S RNA into the large ribosomal subunit, where it forms part of the central protuberance. In Thermosynechococcus vestitus (strain NIES-2133 / IAM M-273 / BP-1), this protein is Large ribosomal subunit protein uL18.